Here is a 386-residue protein sequence, read N- to C-terminus: Tryptophan--tRNA ligase (386 aa).

Positions 82-90 match the 'HIGH' region motif; that stretch reads PSGPMHIGH. The short motif at 253 to 257 is the 'KMSKS' region element; that stretch reads KMSAS.

It belongs to the class-I aminoacyl-tRNA synthetase family.

The protein resides in the cytoplasm. It catalyses the reaction tRNA(Trp) + L-tryptophan + ATP = L-tryptophyl-tRNA(Trp) + AMP + diphosphate + H(+). In Pyrococcus horikoshii (strain ATCC 700860 / DSM 12428 / JCM 9974 / NBRC 100139 / OT-3), this protein is Tryptophan--tRNA ligase.